The sequence spans 101 residues: Small ribosomal subunit protein bS18c (101 aa).

The protein belongs to the bacterial ribosomal protein bS18 family. As to quaternary structure, part of the 30S ribosomal subunit.

Its subcellular location is the plastid. The protein localises to the chloroplast. This chain is Small ribosomal subunit protein bS18c, found in Eucalyptus globulus subsp. globulus (Tasmanian blue gum).